We begin with the raw amino-acid sequence, 206 residues long: Protein GET1 (206 aa).

Residues 1–4 (MPSL) lie on the Lumenal side of the membrane. A helical transmembrane segment spans residues 5-24 (LITILLLNIVIYVINTIGAA). Topologically, residues 25–110 (TIDSLLWLFY…SFDMTVKSVR (86 aa)) are cytoplasmic. Residues 42–99 (SHMAREQRRLKREVIQLKREMNATSSQDEFAKWAKLRRRHDKALETYEAKNNELTQCK) adopt a coiled-coil conformation. A helical transmembrane segment spans residues 111–131 (WAATSGLMLFLQFWYSKRPIF). Residues 132–155 (TLPPGWIPWQVQWVLSFPRAPMGT) lie on the Lumenal side of the membrane. A helical membrane pass occupies residues 156–172 (VSIQIWGGACATVVALV). Over 173–206 (GDAVGATMGFVSASKKEGMKVGAGVGEKEGKKSQ) the chain is Cytoplasmic.

This sequence belongs to the WRB/GET1 family. Interacts with GET3.

It localises to the endoplasmic reticulum membrane. In terms of biological role, required for the post-translational delivery of tail-anchored (TA) proteins to the endoplasmic reticulum. Acts as a membrane receptor for soluble GET3, which recognizes and selectively binds the transmembrane domain of TA proteins in the cytosol. This chain is Protein GET1, found in Ajellomyces dermatitidis (strain ER-3 / ATCC MYA-2586) (Blastomyces dermatitidis).